The following is a 214-amino-acid chain: NADH-quinone oxidoreductase subunit C (214 aa).

The protein belongs to the complex I 30 kDa subunit family. As to quaternary structure, NDH-1 is composed of 14 different subunits. Subunits NuoB, C, D, E, F, and G constitute the peripheral sector of the complex.

The protein localises to the cell inner membrane. It carries out the reaction a quinone + NADH + 5 H(+)(in) = a quinol + NAD(+) + 4 H(+)(out). Functionally, NDH-1 shuttles electrons from NADH, via FMN and iron-sulfur (Fe-S) centers, to quinones in the respiratory chain. The immediate electron acceptor for the enzyme in this species is believed to be ubiquinone. Couples the redox reaction to proton translocation (for every two electrons transferred, four hydrogen ions are translocated across the cytoplasmic membrane), and thus conserves the redox energy in a proton gradient. This is NADH-quinone oxidoreductase subunit C from Francisella tularensis subsp. novicida (strain U112).